A 186-amino-acid polypeptide reads, in one-letter code: UPF0149 protein Pfl01_5435 (186 aa).

This sequence belongs to the UPF0149 family.

The polypeptide is UPF0149 protein Pfl01_5435 (Pseudomonas fluorescens (strain Pf0-1)).